The following is a 363-amino-acid chain: Probable auxin efflux carrier component 5a (363 aa).

10 helical membrane passes run 7–27 (VYKVVAATVPLYFALFLGYGS), 39–59 (CDAVNRLVAFFALPFFTFEFT), 72–92 (VAADVISKAVIVAVIGAWARF), 103–123 (SITSFSLSTLTNSLVVGVPMA), 134–154 (LVVQLSVFQAIVWLTLLLFVL), 222–242 (FVGITWACLANRLHIALPSAF), 246–266 (VLIMSKSGTGMAMFSMGLFMA), 281–301 (LGLVLKFALGPAAMAIGSIAV), 307–327 (VLRVAIIQAALPQSITSFIFA), and 342–362 (IFGMLVSLPLLVGFYIVLELI).

Belongs to the auxin efflux carrier (TC 2.A.69.1) family. Expressed in leaves, shoot apex and panicles. Expressed in roots, stem bases, stems, leaves and young panicles.

The protein localises to the membrane. Functionally, may act as a component of the auxin efflux carrier. This is Probable auxin efflux carrier component 5a from Oryza sativa subsp. japonica (Rice).